The chain runs to 497 residues: Probable FAD-binding monooxygenase AlmA (497 aa).

The helical transmembrane segment at 4 to 24 threads the bilayer; sequence QVDVLIIGAGISGIGLAVHLS. Positions 15, 36, 56, 62, and 104 each coordinate FAD. 54–56 is a binding site for NADP(+); sequence RSD. NADP(+)-binding positions include 184–190, 208–209, and 292–293; these read SGATAIT, RS, and RL. Residue Val-395 coordinates FAD.

It belongs to the FAD-binding monooxygenase family. FAD serves as cofactor.

The protein resides in the cell membrane. The protein operates within hydrocarbon metabolism; alkane degradation. Its function is as follows. Is involved in the degradation of n-alkanes with C chain lengths of 32 and longer. Allows Acinetobacter sp. strain DSM 17874 to grow on long-chain n-alkanes such as dotriacontane (C32H66) or hexatriacontane (C36H74) as a sole carbon source. The sequence is that of Probable FAD-binding monooxygenase AlmA from Acinetobacter sp.